A 445-amino-acid chain; its full sequence is MSEFTQDTVQKPIDELVTWVKQYDFSLNLPTERLAFLLAIAVLSNERFDEELGEGELHDAFAIVTRLFAESGEASAFRANNAINDLVKQRLLSRFTSEMTEGASIYRLTPLAIGITDYYVRHREFSKLKLSIQLSMVADEMAKAVESAQQGGSVAHWRKNVFGVLKYSVSEIFDRIDLNQRVMDEQQQSVKEQIADLLNKDWRDAINNCEALLSETSATLRELQDTLQAAGDELQTQILDIQECVYGDLELDFIEETLFALQMKLDRITSWGQQSIDLWIGYDRHVHKFIRTAIDMDQNRAFSQRLRQSMNDYFEQPWYLTYADAERLSDLRDETLTLRDEEVTGHVPTEVEYEELQQVNDELAQRIGDMLKVHKEQGAAIDLALVLRDYLASHPRTHHFDLARMVVDQAVRLGYSESDYRAIQPDWTAINDFGAKVQANVIDRY.

The segment at 213–241 is leucine-zipper; the sequence is LSETSATLRELQDTLQAAGDELQTQILDI.

The protein belongs to the MukF family. In terms of assembly, interacts, and probably forms a ternary complex, with MukE and MukB via its C-terminal region. The complex formation is stimulated by calcium or magnesium. It is required for an interaction between MukE and MukB.

The protein localises to the cytoplasm. Its subcellular location is the nucleoid. In terms of biological role, involved in chromosome condensation, segregation and cell cycle progression. May participate in facilitating chromosome segregation by condensation DNA from both sides of a centrally located replisome during cell division. Not required for mini-F plasmid partitioning. Probably acts via its interaction with MukB and MukE. Overexpression results in anucleate cells. It has a calcium binding activity. The sequence is that of Chromosome partition protein MukF from Vibrio cholerae serotype O1 (strain ATCC 39541 / Classical Ogawa 395 / O395).